Reading from the N-terminus, the 425-residue chain is Enolase (425 aa).

(2R)-2-phosphoglycerate is bound at residue glutamine 162. The active-site Proton donor is glutamate 204. Residues aspartate 241, glutamate 284, and aspartate 311 each coordinate Mg(2+). (2R)-2-phosphoglycerate is bound by residues lysine 336, arginine 365, serine 366, and lysine 387. Lysine 336 functions as the Proton acceptor in the catalytic mechanism.

It belongs to the enolase family. The cofactor is Mg(2+).

The protein resides in the cytoplasm. It localises to the secreted. The protein localises to the cell surface. It carries out the reaction (2R)-2-phosphoglycerate = phosphoenolpyruvate + H2O. It participates in carbohydrate degradation; glycolysis; pyruvate from D-glyceraldehyde 3-phosphate: step 4/5. Catalyzes the reversible conversion of 2-phosphoglycerate (2-PG) into phosphoenolpyruvate (PEP). It is essential for the degradation of carbohydrates via glycolysis. In Brucella anthropi (strain ATCC 49188 / DSM 6882 / CCUG 24695 / JCM 21032 / LMG 3331 / NBRC 15819 / NCTC 12168 / Alc 37) (Ochrobactrum anthropi), this protein is Enolase.